The following is a 1379-amino-acid chain: DNA-directed RNA polymerase subunit beta (1379 aa).

Belongs to the RNA polymerase beta chain family. In terms of assembly, the RNAP catalytic core consists of 2 alpha, 1 beta, 1 beta' and 1 omega subunit. When a sigma factor is associated with the core the holoenzyme is formed, which can initiate transcription.

It catalyses the reaction RNA(n) + a ribonucleoside 5'-triphosphate = RNA(n+1) + diphosphate. DNA-dependent RNA polymerase catalyzes the transcription of DNA into RNA using the four ribonucleoside triphosphates as substrates. The protein is DNA-directed RNA polymerase subunit beta of Ruegeria sp. (strain TM1040) (Silicibacter sp.).